Here is a 135-residue protein sequence, read N- to C-terminus: Large ribosomal subunit protein uL16c (135 aa).

It belongs to the universal ribosomal protein uL16 family. As to quaternary structure, part of the 50S ribosomal subunit.

It localises to the plastid. It is found in the chloroplast. This is Large ribosomal subunit protein uL16c from Euglena gracilis.